Reading from the N-terminus, the 830-residue chain is Adhesion G protein-coupled receptor E2 (830 aa).

The signal sequence occupies residues methionine 1–alanine 22. Topologically, residues alanine 23–aspartate 540 are extracellular. The EGF-like 1 domain maps to lysine 26–aspartate 68. 5 cysteine pairs are disulfide-bonded: cysteine 30-cysteine 40, cysteine 34-cysteine 46, cysteine 48-cysteine 67, cysteine 73-cysteine 87, and cysteine 81-cysteine 96. Asparagine 42 carries an N-linked (GlcNAc...) asparagine glycan. The 40-residue stretch at aspartate 69–alanine 108 folds into the EGF-like 1; calcium-binding domain. The N-linked (GlcNAc...) asparagine glycan is linked to asparagine 113. In terms of domain architecture, EGF-like 2; calcium-binding spans aspartate 121–aspartate 159. 6 cysteine pairs are disulfide-bonded: cysteine 125–cysteine 138, cysteine 132–cysteine 147, cysteine 169–cysteine 182, cysteine 176–cysteine 191, cysteine 218–cysteine 231, and cysteine 225–cysteine 240. Residues aspartate 165–serine 203 form the EGF-like 3; calcium-binding domain. Asparagine 178 carries an N-linked (GlcNAc...) asparagine glycan. Residues aspartate 214–glutamine 253 enclose the EGF-like 4; calcium-binding domain. N-linked (GlcNAc...) asparagine glycans are attached at residues asparagine 258, asparagine 348, asparagine 361, and asparagine 379. The 180-residue stretch at tryptophan 358–glutamine 537 folds into the GAIN-B domain. Disulfide bonds link cysteine 489-cysteine 519 and cysteine 507-cysteine 521. A GPS region spans residues cysteine 489–glutamine 537. The chain crosses the membrane as a helical span at residues leucine 541–alanine 561. At alanine 562–threonine 576 the chain is on the cytoplasmic side. Residues serine 577 to isoleucine 597 form a helical membrane-spanning segment. Topologically, residues aspartate 598–lysine 603 are extracellular. Residues valine 604–methionine 624 form a helical membrane-spanning segment. The Cytoplasmic portion of the chain corresponds to leucine 625–lysine 651. The chain crosses the membrane as a helical span at residues lysine 652–serine 672. Topologically, residues arginine 673–arginine 690 are extracellular. The chain crosses the membrane as a helical span at residues phenylalanine 691–leucine 711. Residues methionine 712–glutamine 744 lie on the Cytoplasmic side of the membrane. The chain crosses the membrane as a helical span at residues leucine 745–valine 765. The Extracellular portion of the chain corresponds to methionine 766–alanine 767. A helical membrane pass occupies residues tyrosine 768–leucine 788. Residues serine 789–asparagine 830 lie on the Cytoplasmic side of the membrane.

This sequence belongs to the G-protein coupled receptor 2 family. Adhesion G-protein coupled receptor (ADGR) subfamily. In terms of assembly, forms a heterodimer, consisting of a large extracellular region non-covalently linked to a seven-transmembrane moiety. Interacts with chondroitin sulfate; the interaction with chondroitin sulfate is calcium-dependent. Interacts with CD55. Post-translationally, autoproteolytically cleaved into 2 subunits, an extracellular alpha subunit and a seven-transmembrane beta subunit.

It is found in the cell membrane. It localises to the cell projection. The protein localises to the ruffle membrane. Cell surface receptor that binds to the chondroitin sulfate moiety of glycosaminoglycan chains and promotes cell attachment. Promotes granulocyte chemotaxis, degranulation and adhesion. In macrophages, promotes the release of inflammatory cytokines, including IL8 and TNF. Signals probably through G-proteins. In Canis lupus familiaris (Dog), this protein is Adhesion G protein-coupled receptor E2 (ADGRE2).